An 868-amino-acid chain; its full sequence is Leucine-rich repeat receptor-like serine/threonine-protein kinase At2g14510 (868 aa).

The N-terminal stretch at 1–23 (METRNKFMLLACATFSIMSLVKS) is a signal peptide. At 24 to 510 (QNQQGFISLD…KHQPKSWLVA (487 aa)) the chain is on the extracellular side. N-linked (GlcNAc...) asparagine glycans are attached at residues N48, N68, N231, N235, N258, N291, N433, and N446. LRR repeat units lie at residues 412 to 435 (RIIS…QNLT), 436 to 458 (MLRE…LATI), and 460 to 482 (PLLV…LQDR). N-linked (GlcNAc...) asparagine glycosylation occurs at N495. A helical membrane pass occupies residues 511 to 531 (IVASISCVAVTIIVLVLIFIF). The Cytoplasmic portion of the chain corresponds to 532–868 (RRRKSSTRKV…TFISDIPSAR (337 aa)). One can recognise a Protein kinase domain in the interval 563–832 (NNFEVVLGKG…NMTRVAHELN (270 aa)). Residues 569–577 (LGKGGFGVV) and K590 contribute to the ATP site. Phosphotyrosine is present on Y635. D687 serves as the catalytic Proton acceptor. S721 is subject to Phosphoserine. Phosphothreonine is present on residues T722 and T727. Y735 carries the post-translational modification Phosphotyrosine.

It belongs to the protein kinase superfamily. Ser/Thr protein kinase family.

The protein localises to the cell membrane. The catalysed reaction is L-seryl-[protein] + ATP = O-phospho-L-seryl-[protein] + ADP + H(+). It carries out the reaction L-threonyl-[protein] + ATP = O-phospho-L-threonyl-[protein] + ADP + H(+). This chain is Leucine-rich repeat receptor-like serine/threonine-protein kinase At2g14510, found in Arabidopsis thaliana (Mouse-ear cress).